Consider the following 419-residue polypeptide: BTB/POZ domain-containing protein KCTD20 (419 aa).

Residues 117–191 (EKVTLLVDGT…YKTGIINCPD (75 aa)) enclose the BTB domain.

Interacts with AKT1; AKT2 and AKT3. Associates with PP2CA. Part of a complex containing MARK4.

The protein resides in the cytoplasm. Promotes the phosphorylation of AKT family members. The protein is BTB/POZ domain-containing protein KCTD20 (KCTD20) of Homo sapiens (Human).